Consider the following 286-residue polypeptide: MVAKILDGKQIAKDYRQGLQDQVEALKEKGFTPKLSVILVGNDGASQSYVRSKKKAAEKIGMISEIVHLEETATEEEVLNELNRLNNDDSVSGILVQVPLPKQVSEQKILEAINPEKDVDGFHPINIGKLYIDEQTFVPCTPLGIMEILKHADIDLEGKNAVVIGRSHIVGQPVSKLLLQKNASVTILHSRSKDMASYLKDADVIVSAVGKPGLVTKDVVKEGAVIIDVGNTPDENGKLKGDVDYDAVKEIAGAITPVPGGVGPLTITMVLNNTLLAEKMRRGIDS.

Residues 165-167 (GRS) and serine 190 contribute to the NADP(+) site.

Belongs to the tetrahydrofolate dehydrogenase/cyclohydrolase family. In terms of assembly, homodimer.

It catalyses the reaction (6R)-5,10-methylene-5,6,7,8-tetrahydrofolate + NADP(+) = (6R)-5,10-methenyltetrahydrofolate + NADPH. It carries out the reaction (6R)-5,10-methenyltetrahydrofolate + H2O = (6R)-10-formyltetrahydrofolate + H(+). The protein operates within one-carbon metabolism; tetrahydrofolate interconversion. Functionally, catalyzes the oxidation of 5,10-methylenetetrahydrofolate to 5,10-methenyltetrahydrofolate and then the hydrolysis of 5,10-methenyltetrahydrofolate to 10-formyltetrahydrofolate. The protein is Bifunctional protein FolD of Staphylococcus aureus (strain USA300).